Consider the following 1066-residue polypeptide: Phosphatidylinositol 4-kinase PIK1 (1066 aa).

The region spanning 1 to 133 is the PIK helical domain; sequence MHKASSSKKS…GFQVARRVLN (133 aa). 2 positions are modified to phosphoserine: serine 10 and serine 236. Disordered stretches follow at residues 218–240, 303–411, and 564–624; these read KKTS…PIDL, DGKN…KKAN, and NENR…LGDM. Residues 342–356 show a composition bias toward acidic residues; it reads NNEDETGGETEEDAD. Polar residues-rich tracts occupy residues 374-411 and 570-597; these read QPRT…KKAN and STLT…NEGL. Serine 384 is subject to Phosphoserine. The residue at position 394 (threonine 394) is a Phosphothreonine. Phosphoserine occurs at positions 396 and 592. Residues 598–609 are compositionally biased toward low complexity; that stretch reads SSTSRSDSASTA. Residues 770–1049 form the PI3K/PI4K catalytic domain; that stretch reads ATKKERIRKT…FLIGKSLGSI (280 aa). The segment at 776-782 is G-loop; the sequence is IRKTSEY. Positions 915–923 are catalytic loop; sequence QVKDRHNGN. The segment at 934 to 958 is activation loop; it reads HIDFGFMLSNSPGSVGFEAAPFKLT.

The protein belongs to the PI3/PI4-kinase family. Type III PI4K subfamily. As to quaternary structure, interacts with FRQ1.

Its subcellular location is the nucleus. It localises to the golgi apparatus. The protein localises to the trans-Golgi network. The catalysed reaction is a 1,2-diacyl-sn-glycero-3-phospho-(1D-myo-inositol) + ATP = a 1,2-diacyl-sn-glycero-3-phospho-(1D-myo-inositol 4-phosphate) + ADP + H(+). Acts on phosphatidylinositol (PI) in the first committed step in the production of the second messenger inositol 1,4,5,-trisphosphate. PIK1 is part of a nuclear phosphoinositide cycle and could control cytokinesis through the actin cytoskeleton. Involved in the response to mating pheromone. The chain is Phosphatidylinositol 4-kinase PIK1 from Saccharomyces cerevisiae (strain ATCC 204508 / S288c) (Baker's yeast).